Here is a 576-residue protein sequence, read N- to C-terminus: MNIHTLLSEKIQQALVAAGAPADCEAQVRQSAKAQFGDYQANGVMAIAKQLGLPPRKLAENVVGLLNLDGIARKVDIAGPGFINIFLEPSWLANHLAAALSSPRLGIASVASQTIVVDYSAPNVAKEMHVGHVRSTIIGDASVRTLSFLGHNVIRANHVGDWGTQFGMLIAYLEKVQDGGEAEMQLSSLESFYRAAKQHYDEDPAFAERARGYVVKLQGGDEYCRQMWRKLVDVTMAQNQKTYNRLNVTLTRADVMGESLYNDMLPGIVADLKAKGLAVESEGATVVFLDEFKNKEGEPMGVIIQKKDGAYLYTTTDIACAKYRYETLKADRIIYYIDSRQHQHLMLAWTIVRKAGYVPESVPLEHHMFGMMLGKDGKPFKTRAGGTIKLTELLDEALERARRLVAAKNPSMDAGELARLAQVVGIGAVKYADLSKSRTTDYVFDWDNMLSFEGNTAPYMQYAYTRVASIFKRSGQDEQQLTGDIRLEAEQETQLAVRLLQLEEAIATVARDGTPHVLCAYLYDLAVLFSAFYEHCPILNAENAALRQSRLQLALLTARTLKKGLDLLGIETVERM.

The short motif at 122–132 (PNVAKEMHVGH) is the 'HIGH' region element.

The protein belongs to the class-I aminoacyl-tRNA synthetase family. Monomer.

It is found in the cytoplasm. It catalyses the reaction tRNA(Arg) + L-arginine + ATP = L-arginyl-tRNA(Arg) + AMP + diphosphate. The chain is Arginine--tRNA ligase from Sodalis glossinidius (strain morsitans).